Here is a 349-residue protein sequence, read N- to C-terminus: Xylitol-binding protein (349 aa).

An N-terminal signal peptide occupies residues 1–22 (MNITSKIGAIAAAGAVGLGLTA). The N-palmitoyl cysteine moiety is linked to residue C23. C23 carries S-diacylglycerol cysteine lipidation. Xylitol-binding residues include Y42, N121, R173, N224, D249, and Q269.

It belongs to the bacterial solute-binding protein 2 family.

The protein localises to the cell membrane. Part of an ABC transporter complex likely involved in xylitol import. Binds xylitol. This Mycolicibacterium smegmatis (strain ATCC 700084 / mc(2)155) (Mycobacterium smegmatis) protein is Xylitol-binding protein.